We begin with the raw amino-acid sequence, 93 residues long: CRISPR-associated endoribonuclease Cas2 3 (93 aa).

D10 provides a ligand contact to Mg(2+).

The protein belongs to the CRISPR-associated endoribonuclease Cas2 protein family. As to quaternary structure, homodimer, forms a heterotetramer with a Cas1 homodimer. The cofactor is Mg(2+).

Its function is as follows. CRISPR (clustered regularly interspaced short palindromic repeat), is an adaptive immune system that provides protection against mobile genetic elements (viruses, transposable elements and conjugative plasmids). CRISPR clusters contain sequences complementary to antecedent mobile elements and target invading nucleic acids. CRISPR clusters are transcribed and processed into CRISPR RNA (crRNA). Functions as a ssRNA-specific endoribonuclease. Involved in the integration of spacer DNA into the CRISPR cassette. This Chloroflexus aurantiacus (strain ATCC 29366 / DSM 635 / J-10-fl) protein is CRISPR-associated endoribonuclease Cas2 3.